Consider the following 284-residue polypeptide: MFDRLAVLPQYLLPKQAITLLAGRVAGARGGKWTTRLIEWFVKRYKVNMREAANPEVASYATFNDFFTRALQAGARPLARADLICPVDGAISQFGAMAGQQIFQAKGHHYSSTALVGGDAALAAQFDDGHFATLYLSPRDYHRIHMPCDGVLRRMIYVPGALFSVNPTTALGVPGLFARNERVVCVFESARGPFVLVLVGATIVGSMATVWHGVVNPPRSTAVREWRYDEQPVRLKQGEEMGRFLLGSTVVMLFPKGPLQFNPAWSPGAAIRLGEAMARQPPLA.

Catalysis depends on charge relay system; for autoendoproteolytic cleavage activity residues Asp88, His145, and Ser248. Residue Ser248 is the Schiff-base intermediate with substrate; via pyruvic acid; for decarboxylase activity of the active site. Ser248 carries the pyruvic acid (Ser); by autocatalysis modification.

Belongs to the phosphatidylserine decarboxylase family. PSD-B subfamily. Prokaryotic type I sub-subfamily. In terms of assembly, heterodimer of a large membrane-associated beta subunit and a small pyruvoyl-containing alpha subunit. Pyruvate serves as cofactor. Post-translationally, is synthesized initially as an inactive proenzyme. Formation of the active enzyme involves a self-maturation process in which the active site pyruvoyl group is generated from an internal serine residue via an autocatalytic post-translational modification. Two non-identical subunits are generated from the proenzyme in this reaction, and the pyruvate is formed at the N-terminus of the alpha chain, which is derived from the carboxyl end of the proenzyme. The autoendoproteolytic cleavage occurs by a canonical serine protease mechanism, in which the side chain hydroxyl group of the serine supplies its oxygen atom to form the C-terminus of the beta chain, while the remainder of the serine residue undergoes an oxidative deamination to produce ammonia and the pyruvoyl prosthetic group on the alpha chain. During this reaction, the Ser that is part of the protease active site of the proenzyme becomes the pyruvoyl prosthetic group, which constitutes an essential element of the active site of the mature decarboxylase.

The protein localises to the cell membrane. The enzyme catalyses a 1,2-diacyl-sn-glycero-3-phospho-L-serine + H(+) = a 1,2-diacyl-sn-glycero-3-phosphoethanolamine + CO2. It functions in the pathway phospholipid metabolism; phosphatidylethanolamine biosynthesis; phosphatidylethanolamine from CDP-diacylglycerol: step 2/2. In terms of biological role, catalyzes the formation of phosphatidylethanolamine (PtdEtn) from phosphatidylserine (PtdSer). This is Phosphatidylserine decarboxylase proenzyme from Albidiferax ferrireducens (strain ATCC BAA-621 / DSM 15236 / T118) (Rhodoferax ferrireducens).